The following is a 238-amino-acid chain: Urease subunit alpha (238 aa).

The urease gamma stretch occupies residues 1–102 (MKLTPKELDK…LVTVHTPIEA (102 aa)). Residues 103–238 (NGKLVPGELF…DDNYVKTIKE (136 aa)) are urease beta.

The protein in the N-terminal section; belongs to the urease gamma subunit family. It in the C-terminal section; belongs to the urease beta subunit family. Heterohexamer of 3 UreA (alpha) and 3 UreB (beta) subunits. Four heterohexamers assemble to form a 16 nm dodecameric complex.

The catalysed reaction is urea + 2 H2O + H(+) = hydrogencarbonate + 2 NH4(+). It participates in nitrogen metabolism; urea degradation; CO(2) and NH(3) from urea (urease route): step 1/1. The chain is Urease subunit alpha from Helicobacter pylori (strain J99 / ATCC 700824) (Campylobacter pylori J99).